A 264-amino-acid polypeptide reads, in one-letter code: Polyneuridine aldehyde esterase (264 aa).

Residues M1–N6 constitute a propeptide that is removed on maturation. The AB hydrolase-1 domain maps to H12–T122. Residues S87, D216, and H244 contribute to the active site. S87 lines the 16-epivellosimine pocket.

It belongs to the AB hydrolase superfamily. Homodimer; homodimerizes in aqueous solutions at pH 7.0. In terms of tissue distribution, mainly expressed in roots and, to a lower level, in leaves.

It carries out the reaction polyneuridine aldehyde + H2O = 16-epivellosimine + methanol + CO2. It functions in the pathway alkaloid biosynthesis; ajmaline biosynthesis. Inhibited by DEPC and HgCl(2). Its function is as follows. Hydrolase involved in the biosynthesis of ajmaline-type monoterpenoid indole alkaloids (MIAs) natural products, important plant-derived pharmaceuticals used in the therapy of heart disorders. Catalyzes the hydrolysis of polyneuridine aldehyde into epi-vellosimine, precursor of vomilenine, an intermediate chemical in the biosynthesis of ajmaline. This is Polyneuridine aldehyde esterase from Rauvolfia serpentina (Serpentine wood).